The primary structure comprises 840 residues: Heat shock 70 kDa protein 4 (840 aa).

Lys53 is modified (N6-acetyllysine). Phosphoserine is present on Ser76. Phosphotyrosine is present on residues Tyr89 and Tyr336. 2 positions are modified to phosphoserine: Ser393 and Ser415. Position 430 is an N6-acetyllysine (Lys430). A disordered region spans residues 500–575; the sequence is VHKSEENEEP…QAKKAKVKTS (76 aa). Residues 514 to 533 show a composition bias toward basic and acidic residues; that stretch reads QNAKEEEKMQVDQEEPHVEE. Position 538 is a phosphothreonine (Thr538). A phosphoserine mark is found at Ser546 and Ser647. At Tyr660 the chain carries Phosphotyrosine. Residue Lys679 is modified to N6-acetyllysine. Position 756 is a phosphoserine (Ser756). Lys773 is subject to N6-methyllysine. Residues 783–840 form a disordered region; that stretch reads ISKPKPKVEPPKEEQKNAEQNGPVDGQGDNPGPQAAEQGTDAAVPSDSDKKLPEMDID. 2 stretches are compositionally biased toward basic and acidic residues: residues 788–799 and 829–840; these read PKVEPPKEEQKN and DSDKKLPEMDID.

This sequence belongs to the heat shock protein 70 family. Interacts with TJP1/ZO-1.

Its subcellular location is the cytoplasm. In Pongo abelii (Sumatran orangutan), this protein is Heat shock 70 kDa protein 4 (HSPA4).